The sequence spans 1123 residues: uncharacterized protein (1123 aa).

This is an uncharacterized protein from Ictaluridae (bullhead catfishes).